We begin with the raw amino-acid sequence, 1292 residues long: Putative late blight resistance protein homolog R1C-3 (1292 aa).

Coiled coils occupy residues Asp394 to Gln414 and Arg505 to Asn526. The NB-ARC domain occupies Arg505–Gly792. Gly538–Thr545 contacts ATP. 7 LRR repeats span residues Ala842–His865, Phe920–Leu944, Leu963–Met991, Pro1066–Ala1089, Tyr1094–His1113, Leu1114–Gln1142, and Phe1163–Ile1187. The HMA domain maps to Glu1211–Glu1278.

Belongs to the disease resistance NB-LRR family.

Its subcellular location is the cytoplasm. It localises to the membrane. Confers resistance to late blight (Phytophthora infestans) races carrying the avirulence gene Avr1. Resistance proteins guard the plant against pathogens that contain an appropriate avirulence protein via an indirect interaction with this avirulence protein. That triggers a defense system including the hypersensitive response, which restricts the pathogen growth. This Solanum demissum (Wild potato) protein is Putative late blight resistance protein homolog R1C-3 (R1C-3).